The primary structure comprises 394 residues: Na(+)/H(+) antiporter NhaA (394 aa).

11 consecutive transmembrane segments (helical) span residues 14–34, 59–79, 95–115, 125–145, 154–174, 179–199, 213–233, 254–274, 292–312, 328–348, and 363–383; these read AGGLILIIAAAIALLMANSAL, LLLWINDGLMAVFFLMIGLEV, VFPAIAALGGMLAPALIYLLF, GWAIPAATDIAFALGVMALLG, VFLLALAIIDDLGVIIIIALF, VSLQSLGIAAAAIALLAYMNW, LVLWVCILKSGVHATLAGVIV, GLHPWVAYLILPLFAFANAGV, IATGLFIGKPLGIFTFSWLAV, IFAVSVLCGIGFTMSIFIASL, and LGILLGSTTAAVVGYSLLRLV.

Belongs to the NhaA Na(+)/H(+) (TC 2.A.33) antiporter family.

The protein localises to the cell inner membrane. It catalyses the reaction Na(+)(in) + 2 H(+)(out) = Na(+)(out) + 2 H(+)(in). In terms of biological role, na(+)/H(+) antiporter that extrudes sodium in exchange for external protons. This is Na(+)/H(+) antiporter NhaA from Yersinia pestis bv. Antiqua (strain Angola).